We begin with the raw amino-acid sequence, 373 residues long: Mating-type protein A-2 (373 aa).

The disordered stretch occupies residues 1–22 (MNLLNMQPKRSEQPAMFEENRA).

The protein to P.anserina SMR1.

Its function is as follows. Required, together with mating-type protein A-3, for efficient ascospore formation. The protein is Mating-type protein A-2 (matA-2) of Neurospora crassa (strain ATCC 24698 / 74-OR23-1A / CBS 708.71 / DSM 1257 / FGSC 987).